Reading from the N-terminus, the 249-residue chain is Long form salivary protein D7L (249 aa).

The first 19 residues, Met-1–Ser-19, serve as a signal peptide directing secretion. 2 cysteine pairs are disulfide-bonded: Cys-36/Cys-66 and Cys-62/Cys-112. Trp-49 is a thromboxane A2 binding site. Trp-52 contacts leukotriene C4. Tyr-63 contributes to the thromboxane A2 binding site. Residues Gly-136 and Lys-154 each coordinate leukotriene C4. Lys-154 provides a ligand contact to thromboxane A2. Intrachain disulfides connect Cys-162-Cys-178, Cys-174-Cys-221, and Cys-211-Cys-230.

It belongs to the PBP/GOBP family.

Its subcellular location is the secreted. Its function is as follows. Modulates blood feeding of female sandflies on vertebrate species by binding and sequestering different mediators involved in the host response. Binds leukotriene C4, leukotriene D4, leukotriene E4 and U-46619, a stable analog of thromboxane A2. Does not bind histamine or serotonin. Inhibits platelet aggregation induced by low concentrations of collagen in thromboxane A2-dependent manner. This is Long form salivary protein D7L from Phlebotomus duboscqi (Sandfly).